Consider the following 425-residue polypeptide: UPF0597 protein VF_0641 (425 aa).

Belongs to the UPF0597 family.

The protein is UPF0597 protein VF_0641 of Aliivibrio fischeri (strain ATCC 700601 / ES114) (Vibrio fischeri).